A 272-amino-acid chain; its full sequence is Flagellin (272 aa).

This sequence belongs to the bacterial flagellin family.

The protein localises to the secreted. The protein resides in the bacterial flagellum. Its function is as follows. Flagellin is the subunit protein which polymerizes to form the filaments of bacterial flagella. This Halalkalibacterium halodurans (strain ATCC BAA-125 / DSM 18197 / FERM 7344 / JCM 9153 / C-125) (Bacillus halodurans) protein is Flagellin (hag).